The chain runs to 441 residues: Matrix extracellular phosphoglycoprotein (441 aa).

The signal sequence occupies residues 1 to 24 (MTPEGLMKMQAVSVGLLLFSMTWA). Residue N82 is glycosylated (N-linked (GlcNAc...) asparagine). The interval 137-441 (QSSPVKSKHT…SGSSSESHGD (305 aa)) is disordered. Residues 142 to 156 (KSKHTKHTRQTRRST) show a composition bias toward basic residues. Residues 178–200 (PDLLVRGDNDVPPFSGDGQHFMH) form a dentonin region. Residues 183–185 (RGD) carry the Cell attachment site motif. S192 is a glycosylation site (O-linked (Xyl...) (chondroitin sulfate) serine). Residues 211-223 (PESSTSRPLSGSS) are compositionally biased toward polar residues. Positions 313–325 (SREKVKGGVEHAG) are enriched in basic and acidic residues. Polar residues-rich tracts occupy residues 349 to 358 (GNQLTLTASQ) and 391 to 405 (GQNN…SQRR). Residues 424–441 (RDSSESSSSGSSSESHGD) are ASARM motif; interaction with PHEX. Residues 428 to 441 (ESSSSGSSSESHGD) show a composition bias toward low complexity.

The protein belongs to the PF07175/osteoregulin family. In terms of assembly, interacts (via ASARM motif) with PHEX; the interaction is zinc-dependent. In terms of processing, phosphorylated on serine residues in the ASARM motif; the phosphorylation is important for the inhibition of bone mineralization. Post-translationally, cleaved by CTSB/cathepsin B; the cleavage is blocked by metalloprotease PHEX. In terms of tissue distribution, expressed in osteocytes (at protein level). Expressed by chondrocytes, specifically in the hypertrophic zone of the bone growth plate (at protein level). Expressed in osteoblasts in bone (at protein level). Expressed by osteoblasts within the metaphysis (at protein level). Expressed at low levels in white fat, brown fat, testes, brain and aorta. Expressed in the craniofacial complex (at protein level). Expressed in odontoblasts, ameloblasts and in predentin during tooth development (at protein level). Expressed in the kidney (at protein level). Expressed in osteocytes in mandibular condylar cartilage and tibial cartilage (at protein level). Expressed in salivary glands.

The protein resides in the secreted. Its subcellular location is the extracellular space. The protein localises to the extracellular matrix. Its function is as follows. Regulates renal phosphate and uric acid excretion. Regulates bone mineralization by osteoblasts and cartilage mineralization by chondrocytes. Regulates the mineralization of the extracellular matrix of the craniofacial complex, such as teeth, bone and cartilage. Increases dental pulp stem cell proliferation. In Mus musculus (Mouse), this protein is Matrix extracellular phosphoglycoprotein.